Consider the following 1302-residue polypeptide: MTPLKTSVKAFFTLHVLFSCISHGLVEGSRLPDPQLLPDGDTHLQHVGGTLTLICRGSTALHWRLASRNVSSVRIESCEERLHKHCSKLVIHNLRHNDTGIYSCSHKKSSDHEVSTYVFVKDPHHPFVEAYSLPHPLFAYRNDPYFVVPCRTTYPNQNVILETQMNPMADDVKRGVQWDPKKGFTVPLKPYDSYHLITCLTRVDNAEFSSVYLLKRLTMEIKNLAIEPERPRVLVGDTLILNCSAETTYNGRIHFEWEFHKERINRTHHFSTTPVQLAQIMVMSKALIVPNVTMEDKGTYTCTGSIEFKKLQMSTKVIVYEHPFLNVTHNKRKFTSTVEGRRVQFEPRVNAVPAPDRVLWYKDGVAISENSTCYETAGYNLTIKQVRQKDAGIFTIALSNQERGLYRNISYKLEVRVKPKIFEEDVAPAGPQTFRYDQRHKLTCTAFGIPMPNITWFWQPCDPSANLTECKLYTDPLPIENVDDHFPQNPIKDVNSKVGLLKSKNRTISTLVVKTANVSGVYSCTARNELGNRTMRIPFYVDDHPQPFEIEPSTAVAGDDITLTCRGTRYLYDRLTWYDPLGHKVPKDETTLRIEPYTISLSIKLPNVSRNHTLGYECQALKINTNKVVNVTSALTIDERQGPWLMQNLTNQDVNSSSTLTLACLAYGVPAPFITWYKDKTPVTEGPGITLKDDGTLIIERVKKDDEGIYECRASNDGGEAKTSAVITVVGEDGKPNIEVIILVSTGAAATFLWIMLILFIRKLRKPSSADLKTGYLSIIMDPEQMPLDEQCDRLPYDSNKWEFPQDRLRLGKTLGHGAFGKVVEASAFGIDKISTCKTVAVKMLKVGATNNEWRALMSELKILIHIGHHLNVVNLLGACTKRGGPLMIIVEFCKYGNLSNYLRSKRGDFVVYKSQDGKAVRSSSGCDLSELIKRRLESVASTGSSASSGFIEDKSYCDSEEEEEEQEDLYKKVLTLEDLICYSFQVAKGMEFLASRKCIHRDLAARNILLSENNVVKICDFGLARDVYKDPDYVRKGDARLPLKWMAPEAIFDKIYTTQSDVWSFGVLMWEIFSLGASPYPGLHIDEEFCCRLKEGTRMKAPEYSSSEIYQTMLDCWHGEPSQRPTFTELVERLGDLLQASVQQEGKHYIPINTALLTKADPSNQSPTEETSTRPVSLRDSGTAWNIKIRPESVKTFDEVILENGTNKIHEGGQSDSGIGLSSDDLKTLKRLESLARPRSFMSRAMKRKSKESVLLEGEMDKYPPLVPSLSLEDSSLDSEMECHSPPPDYNYVVRYSTPPV.

The signal sequence occupies residues M1–G28. The Extracellular segment spans residues S29–V740. Ig-like C2-type domains lie at P34–S115, D143–A206, K222–I318, N326–K412, P419–D542, P545–T636, and P643–T728. 2 cysteine pairs are disulfide-bonded: C55–C104 and C150–C199. N-linked (GlcNAc...) asparagine glycans are attached at residues N69 and N97. 17 N-linked (GlcNAc...) asparagine glycosylation sites follow: N242, N265, N291, N326, N370, N380, N408, N453, N466, N505, N517, N532, N607, N611, N630, N648, and N655. A disulfide bond links C243 and C302. C444 and C524 form a disulfide bridge. A disulfide bridge links C565 with C618. C664 and C712 are joined by a disulfide. A helical transmembrane segment spans residues I741–I761. Residues R762–V1302 are Cytoplasmic-facing. One can recognise a Protein kinase domain in the interval L809–L1139. Residues L815–V823 and K843 contribute to the ATP site. D1003 acts as the Proton acceptor in catalysis. Y1029, Y1034, and Y1150 each carry phosphotyrosine; by autocatalysis. Disordered regions lie at residues T1159–L1179 and P1266–N1292. Positions D1162 to P1176 are enriched in polar residues.

This sequence belongs to the protein kinase superfamily. Tyr protein kinase family. CSF-1/PDGF receptor subfamily. As to quaternary structure, interacts with isoform VEGF165 of vegfaa and isoform VEGF171 of vegfab. Phosphorylated and activated by vegfaa and vegfab. First expressed in embryos between 5- and 7-somites. At 7 somites, expressed in discrete bilateral stripes both anteriorly and posteriorly, and in a transverse ectodermal stripe in the hindbrain. From 7-somites, expression seems to extend caudally from the head, and in both directions in the trunk region, until by 20-somites, expression is detected as a continuous band from the anterior head region to the tailbud. Concurrently, cells expressing kdrl in the mid- and posterior trunk regions converge medially. By 24 hours post-fertilization (hpf), expressed in all the endothelial cells lining the vasculature.

It is found in the cell membrane. The enzyme catalyses L-tyrosyl-[protein] + ATP = O-phospho-L-tyrosyl-[protein] + ADP + H(+). Receptor for VEGF or VEGFC. Has a tyrosine-protein kinase activity. Combinations of multiple VEGF receptors are required for development of different blood vessel types in the embryo. Involved in angiogenesis, specifically in VEGF-induced sprouting of new blood vessels. Particularly involved in artery formation. Does not appear to be required for hematopoiesis. In Danio rerio (Zebrafish), this protein is Vascular endothelial growth factor receptor kdr-like (kdrl).